The following is a 457-amino-acid chain: ATP-dependent protease ATPase subunit HslU (457 aa).

ATP is bound by residues Ile-18 and 60–65 (GVGKTE). Positions 142-171 (KQPGMGFFNPAAPEEQEEQPSADQSSTREK) are disordered. Positions 269, 335, and 407 each coordinate ATP.

It belongs to the ClpX chaperone family. HslU subfamily. A double ring-shaped homohexamer of HslV is capped on each side by a ring-shaped HslU homohexamer. The assembly of the HslU/HslV complex is dependent on binding of ATP.

It localises to the cytoplasm. ATPase subunit of a proteasome-like degradation complex; this subunit has chaperone activity. The binding of ATP and its subsequent hydrolysis by HslU are essential for unfolding of protein substrates subsequently hydrolyzed by HslV. HslU recognizes the N-terminal part of its protein substrates and unfolds these before they are guided to HslV for hydrolysis. This is ATP-dependent protease ATPase subunit HslU from Maridesulfovibrio salexigens (strain ATCC 14822 / DSM 2638 / NCIMB 8403 / VKM B-1763) (Desulfovibrio salexigens).